The chain runs to 361 residues: Outer mitochondrial transmembrane helix translocase (361 aa).

Residues 1–15 (MVHAEAFSRPLSRNE) are Mitochondrial intermembrane-facing. A helical membrane pass occupies residues 16–32 (VVGLIFRLTIFGAVTYF). The Cytoplasmic portion of the chain corresponds to 33–361 (TIKWMVDAID…QSVLTHVCLD (329 aa)). Position 133–140 (133–140 (GPPGCGKT)) interacts with ATP. Serine 322 is modified (phosphoserine).

The protein belongs to the AAA ATPase family. MSP1 subfamily. In terms of assembly, interacts with GRIA2 and GRIP1 in an ATP-dependent manner. ATAD1-catalyzed ATP hydrolysis disrupts not only its binding to GRIA2 and GRIP1, but also interaction between GRIP1 and GRIA2, leading to AMPAR complex disassembly.

The protein resides in the mitochondrion outer membrane. It is found in the peroxisome membrane. It localises to the postsynaptic cell membrane. It carries out the reaction [protein]-with a C-terminal TM segment(out) + ATP + H2O = [protein]-with a C-terminal TM segment(in) + ADP + phosphate + H(+). Outer mitochondrial translocase required to remove mislocalized tail-anchored transmembrane proteins on mitochondria. Specifically recognizes and binds tail-anchored transmembrane proteins: acts as a dislocase that mediates the ATP-dependent extraction of mistargeted tail-anchored transmembrane proteins from the mitochondrion outer membrane. Also plays a critical role in regulating the surface expression of AMPA receptors (AMPAR), thereby regulating synaptic plasticity and learning and memory. Required for NMDA-stimulated AMPAR internalization and inhibition of GRIA1 and GRIA2 recycling back to the plasma membrane; these activities are ATPase-dependent. This chain is Outer mitochondrial transmembrane helix translocase, found in Rattus norvegicus (Rat).